The following is a 360-amino-acid chain: Magnesium transporter NIPA2 (360 aa).

The Extracellular portion of the chain corresponds to 1–9 (MSQGHGKYD). A helical membrane pass occupies residues 10–30 (FYIGLGLAMSSSIFIGGSFIL). Topologically, residues 31-56 (KKKGLLRLARKGSTRAGQGGHAYLKE) are cytoplasmic. The helical transmembrane segment at 57–77 (WLWWAGLLSMGAGEVANFAAY) threads the bilayer. A78 is a topological domain (extracellular). Residues 79-99 (FAPATLVTPLGALSVLVSAIL) form a helical membrane-spanning segment. The Cytoplasmic portion of the chain corresponds to 100–107 (SSYFLNER). The chain crosses the membrane as a helical span at residues 108-128 (LNLHGKIGCLLSILGSTVMVI). At 129–149 (HAPKEEEIETLNEMSHKLGDP) the chain is on the extracellular side. The chain crosses the membrane as a helical span at residues 150–170 (GFVVFATLVVIVSLILIFVVG). At 171–175 (PRHGQ) the chain is on the cytoplasmic side. The chain crosses the membrane as a helical span at residues 176–196 (TNILVYITICSVIGAVSVSCA). The Extracellular portion of the chain corresponds to 197-215 (KGLGIAIKELFAGKPVLQH). A helical membrane pass occupies residues 216-236 (PLTWILLLSLIVCVSTQINYL). Over 237–246 (NRALDIFNTS) the chain is Cytoplasmic. The helical transmembrane segment at 247–267 (IVTPIYYVFFTTSVITCSAIL) threads the bilayer. Topologically, residues 268–278 (FKEWQDMPVDD) are extracellular. A helical membrane pass occupies residues 279–299 (VIGTLSGFFTIIVGIFLLHAF). The Cytoplasmic portion of the chain corresponds to 300–360 (KDVSFSLSSL…SRRNGNLTAF (61 aa)).

Belongs to the NIPA family.

The protein localises to the cell membrane. It localises to the early endosome. It catalyses the reaction Mg(2+)(in) = Mg(2+)(out). Its function is as follows. Acts as a selective Mg(2+) transporter. The polypeptide is Magnesium transporter NIPA2 (NIPA2) (Bos taurus (Bovine)).